The following is a 111-amino-acid chain: Phosphoribosyl-ATP pyrophosphatase (111 aa).

It belongs to the PRA-PH family.

It is found in the cytoplasm. The catalysed reaction is 1-(5-phospho-beta-D-ribosyl)-ATP + H2O = 1-(5-phospho-beta-D-ribosyl)-5'-AMP + diphosphate + H(+). The protein operates within amino-acid biosynthesis; L-histidine biosynthesis; L-histidine from 5-phospho-alpha-D-ribose 1-diphosphate: step 2/9. The protein is Phosphoribosyl-ATP pyrophosphatase of Pseudomonas putida (strain ATCC 700007 / DSM 6899 / JCM 31910 / BCRC 17059 / LMG 24140 / F1).